A 147-amino-acid chain; its full sequence is Large ribosomal subunit protein uL13 (147 aa).

Belongs to the universal ribosomal protein uL13 family. As to quaternary structure, part of the 50S ribosomal subunit.

Its function is as follows. This protein is one of the early assembly proteins of the 50S ribosomal subunit, although it is not seen to bind rRNA by itself. It is important during the early stages of 50S assembly. In Deinococcus geothermalis (strain DSM 11300 / CIP 105573 / AG-3a), this protein is Large ribosomal subunit protein uL13.